We begin with the raw amino-acid sequence, 467 residues long: A-type ATP synthase subunit B (467 aa).

Residues 95-114 are disordered; that stretch reads GKGQPRDHMPLPPPEDFRDV.

This sequence belongs to the ATPase alpha/beta chains family. In terms of assembly, has multiple subunits with at least A(3), B(3), C, D, E, F, H, I and proteolipid K(x).

It localises to the cell membrane. In terms of biological role, component of the A-type ATP synthase that produces ATP from ADP in the presence of a proton gradient across the membrane. The B chain is a regulatory subunit. The polypeptide is A-type ATP synthase subunit B (Pyrobaculum neutrophilum (strain DSM 2338 / JCM 9278 / NBRC 100436 / V24Sta) (Thermoproteus neutrophilus)).